A 121-amino-acid polypeptide reads, in one-letter code: MSQQLTYSSKINKIRTFALILVFAGIITMYGGILTKNIEWLMVIFFILGTLMVILSCAVYVWIGTLSLRAVPVICPSCEKPTKMLGRVDACMHCKQPLTMDKNLEGIEFDEKYNSRKYKKK.

A run of 2 helical transmembrane segments spans residues 14–34 (IRTF…GGIL) and 43–63 (VIFF…YVWI).

The protein belongs to the UPF0295 family.

The protein resides in the cell membrane. In Oceanobacillus iheyensis (strain DSM 14371 / CIP 107618 / JCM 11309 / KCTC 3954 / HTE831), this protein is UPF0295 protein OB0906.